A 104-amino-acid chain; its full sequence is Protein RnfH (104 aa).

This sequence belongs to the UPF0125 (RnfH) family.

The chain is Protein RnfH from Pseudomonas fluorescens (strain ATCC BAA-477 / NRRL B-23932 / Pf-5).